The primary structure comprises 130 residues: Small ribosomal subunit protein uS8 (130 aa).

The protein belongs to the universal ribosomal protein uS8 family. In terms of assembly, part of the 30S ribosomal subunit.

Functionally, one of the primary rRNA binding proteins, it binds directly to 16S rRNA central domain where it helps coordinate assembly of the platform of the 30S subunit. In Methanoregula boonei (strain DSM 21154 / JCM 14090 / 6A8), this protein is Small ribosomal subunit protein uS8.